Here is a 500-residue protein sequence, read N- to C-terminus: NAD(P)H-quinone oxidoreductase chain 4, chloroplastic (500 aa).

14 helical membrane-spanning segments follow: residues 4 to 24 (FPWL…MLFL), 35 to 55 (YTIC…CYNF), 87 to 107 (IGTI…AFPV), 113 to 130 (LFHF…GSFS), 134 to 154 (LLLF…LLSM), 167 to 187 (FILY…GISL), 211 to 231 (IILY…IPLH), 242 to 262 (HYST…YGLV), 272 to 292 (AHSM…IYAA), 305 to 325 (IAYS…SITD), 330 to 350 (GAIL…FLAG), 386 to 406 (LALP…GIIT), 416 to 436 (ILII…LLSM), and 466 to 486 (ISSL…LALA).

It belongs to the complex I subunit 4 family.

Its subcellular location is the plastid. The protein localises to the chloroplast thylakoid membrane. The catalysed reaction is a plastoquinone + NADH + (n+1) H(+)(in) = a plastoquinol + NAD(+) + n H(+)(out). It catalyses the reaction a plastoquinone + NADPH + (n+1) H(+)(in) = a plastoquinol + NADP(+) + n H(+)(out). The chain is NAD(P)H-quinone oxidoreductase chain 4, chloroplastic from Aethionema grandiflorum (Persian stone-cress).